The following is a 359-amino-acid chain: Heat-inducible transcription repressor HrcA (359 aa).

The protein belongs to the HrcA family.

Functionally, negative regulator of class I heat shock genes (grpE-dnaK-dnaJ and groELS operons). Prevents heat-shock induction of these operons. The chain is Heat-inducible transcription repressor HrcA from Roseiflexus castenholzii (strain DSM 13941 / HLO8).